Consider the following 312-residue polypeptide: Malate dehydrogenase (312 aa).

NAD(+)-binding positions include 12–17 (GAGFTG) and D36. Substrate-binding residues include R87 and R93. NAD(+) is bound by residues N100 and 123-125 (LTN). N125 contacts substrate. S149 is subject to Phosphoserine. R156 provides a ligand contact to substrate. H180 serves as the catalytic Proton acceptor.

This sequence belongs to the LDH/MDH superfamily. MDH type 3 family.

The enzyme catalyses (S)-malate + NAD(+) = oxaloacetate + NADH + H(+). Catalyzes the reversible oxidation of malate to oxaloacetate. This chain is Malate dehydrogenase, found in Bacillus licheniformis (strain ATCC 14580 / DSM 13 / JCM 2505 / CCUG 7422 / NBRC 12200 / NCIMB 9375 / NCTC 10341 / NRRL NRS-1264 / Gibson 46).